The following is a 249-amino-acid chain: Eukaryotic translation initiation factor 3 subunit K (249 aa).

Residues 46–222 (FDCYANLALL…VKVPTNKENE (177 aa)) form the PCI domain.

Belongs to the eIF-3 subunit K family. Component of the eukaryotic translation initiation factor 3 (eIF-3) complex.

It is found in the cytoplasm. In terms of biological role, component of the eukaryotic translation initiation factor 3 (eIF-3) complex, which is involved in protein synthesis of a specialized repertoire of mRNAs and, together with other initiation factors, stimulates binding of mRNA and methionyl-tRNAi to the 40S ribosome. The eIF-3 complex specifically targets and initiates translation of a subset of mRNAs involved in cell proliferation. This chain is Eukaryotic translation initiation factor 3 subunit K, found in Neosartorya fischeri (strain ATCC 1020 / DSM 3700 / CBS 544.65 / FGSC A1164 / JCM 1740 / NRRL 181 / WB 181) (Aspergillus fischerianus).